Reading from the N-terminus, the 250-residue chain is 3-deoxy-manno-octulosonate cytidylyltransferase (250 aa).

This sequence belongs to the KdsB family.

It is found in the cytoplasm. The enzyme catalyses 3-deoxy-alpha-D-manno-oct-2-ulosonate + CTP = CMP-3-deoxy-beta-D-manno-octulosonate + diphosphate. It functions in the pathway nucleotide-sugar biosynthesis; CMP-3-deoxy-D-manno-octulosonate biosynthesis; CMP-3-deoxy-D-manno-octulosonate from 3-deoxy-D-manno-octulosonate and CTP: step 1/1. It participates in bacterial outer membrane biogenesis; lipopolysaccharide biosynthesis. In terms of biological role, activates KDO (a required 8-carbon sugar) for incorporation into bacterial lipopolysaccharide in Gram-negative bacteria. This is 3-deoxy-manno-octulosonate cytidylyltransferase from Legionella pneumophila subsp. pneumophila (strain Philadelphia 1 / ATCC 33152 / DSM 7513).